A 187-amino-acid polypeptide reads, in one-letter code: Adenylate kinase (187 aa).

10-15 (GSGKGT) lines the ATP pocket. The segment at 30–59 (STGDMLRAEIAAGTELGKQAKTVMDAGNLV) is NMP. AMP-binding positions include Thr31, Arg36, 57–59 (NLV), 85–88 (GYPR), and Gln92. An LID region spans residues 126–136 (GRAKEQGRADD). Residue Arg127 coordinates ATP. Residues Arg133 and Arg144 each coordinate AMP. Gly172 is an ATP binding site.

This sequence belongs to the adenylate kinase family. As to quaternary structure, monomer.

It localises to the cytoplasm. It carries out the reaction AMP + ATP = 2 ADP. Its pathway is purine metabolism; AMP biosynthesis via salvage pathway; AMP from ADP: step 1/1. Catalyzes the reversible transfer of the terminal phosphate group between ATP and AMP. Plays an important role in cellular energy homeostasis and in adenine nucleotide metabolism. The chain is Adenylate kinase from Stenotrophomonas maltophilia (strain K279a).